Reading from the N-terminus, the 225-residue chain is Ribonuclease HII (225 aa).

Residues 35-225 (GLVAGVDEVG…SFRPCQISLD (191 aa)) form the RNase H type-2 domain. 3 residues coordinate a divalent metal cation: D41, E42, and D137.

The protein belongs to the RNase HII family. Mn(2+) is required as a cofactor. It depends on Mg(2+) as a cofactor.

It localises to the cytoplasm. It carries out the reaction Endonucleolytic cleavage to 5'-phosphomonoester.. Endonuclease that specifically degrades the RNA of RNA-DNA hybrids. The polypeptide is Ribonuclease HII (Trichormus variabilis (strain ATCC 29413 / PCC 7937) (Anabaena variabilis)).